Here is a 795-residue protein sequence, read N- to C-terminus: Glutamine--tRNA ligase, cytoplasmic (795 aa).

Residues 188-220 (ADNEKPTKKKEKKEKPAKVEEKKAVVETTAEPS) form a disordered region. The span at 200 to 212 (KEKPAKVEEKKAV) shows a compositional bias: basic and acidic residues. The 'HIGH' region motif lies at 277-287 (PEPNGYLHIGH). Residues 278 to 280 (EPN) and 284 to 290 (HIGHAKA) each bind ATP. L-glutamine is bound by residues aspartate 310 and tyrosine 450. Residues threonine 469, 498 to 499 (RL), and 506 to 508 (MSK) each bind ATP. The short motif at 505–509 (VMSKR) is the 'KMSKS' region element.

This sequence belongs to the class-I aminoacyl-tRNA synthetase family.

Its subcellular location is the cytoplasm. It is found in the cytosol. The enzyme catalyses tRNA(Gln) + L-glutamine + ATP = L-glutaminyl-tRNA(Gln) + AMP + diphosphate. This Arabidopsis thaliana (Mouse-ear cress) protein is Glutamine--tRNA ligase, cytoplasmic.